Consider the following 602-residue polypeptide: MEDDIWKAVDLSGVFDEDSVELRPRLTSVSSPSLSSTPPPSPLSSPSWSEEELPAPRSDGSPASSISAHKSYPKIFQTFKKDLSEVTVDRLMYPSFYERVQISIQTEDQSWLQRISARKRIKRIPSIEITEAPQENLASKLRENWVINPEEPKLSILCEMEFNEDFVNFFETSLRTLPSIGPPTILSYRKEYSCMDVILKDEQELGATCEFCGSDLQSLFFNMDTSLDDAGTKGKSHRSCCLQFQNLLDYITEERLTTKSPEMELISISPHAAHGSDADRLKAKEKAMQRKQERQMARHFTIIPEQSPVGTEEDTKHLKTISYQLSGDYLQNVRTEEVDLQITNISITCCDSWKICGKVMGNELLEKDYKHGSKFLTSFPDGTIQIFYPSGNLAIIRVPNKTDGFICIIQEDTATSPAILALFDSSGRSSCYHPNGNVWVYINILGGQYSDQAGNRIRTWNWSSTKPTPAFVSFKPVLLALNRYIGIRILEQDKVSIHFLAMGQQATICLGTKVVLQDPEEVPTLRFLSGDDLLLLASLIKIRRLFSKMEGCVNFPVSKAWERLKQPSYLSSLSLKLLALCQNSGIQQNIMETITELIKENE.

The disordered stretch occupies residues 22-67; sequence LRPRLTSVSSPSLSSTPPPSPLSSPSWSEEELPAPRSDGSPASSIS. The segment covering 25 to 36 has biased composition (low complexity); sequence RLTSVSSPSLSS.

Belongs to the ERICH6 family.

The protein localises to the nucleus. This is Glutamate-rich protein 6 (Erich6) from Rattus norvegicus (Rat).